Here is a 278-residue protein sequence, read N- to C-terminus: Dermonecrotic toxin LhSicTox-alphaIV1ii (278 aa).

The active site involves H5. Residues E25 and D27 each coordinate Mg(2+). H41 (nucleophile) is an active-site residue. Cystine bridges form between C45–C51 and C47–C192. Residue D85 participates in Mg(2+) binding.

Belongs to the arthropod phospholipase D family. Class II subfamily. Mg(2+) serves as cofactor. Expressed by the venom gland.

It is found in the secreted. It catalyses the reaction an N-(acyl)-sphingosylphosphocholine = an N-(acyl)-sphingosyl-1,3-cyclic phosphate + choline. The enzyme catalyses an N-(acyl)-sphingosylphosphoethanolamine = an N-(acyl)-sphingosyl-1,3-cyclic phosphate + ethanolamine. It carries out the reaction a 1-acyl-sn-glycero-3-phosphocholine = a 1-acyl-sn-glycero-2,3-cyclic phosphate + choline. The catalysed reaction is a 1-acyl-sn-glycero-3-phosphoethanolamine = a 1-acyl-sn-glycero-2,3-cyclic phosphate + ethanolamine. Dermonecrotic toxins cleave the phosphodiester linkage between the phosphate and headgroup of certain phospholipids (sphingolipid and lysolipid substrates), forming an alcohol (often choline) and a cyclic phosphate. This toxin acts on sphingomyelin (SM). It may also act on ceramide phosphoethanolamine (CPE), lysophosphatidylcholine (LPC) and lysophosphatidylethanolamine (LPE), but not on lysophosphatidylserine (LPS), and lysophosphatidylglycerol (LPG). It acts by transphosphatidylation, releasing exclusively cyclic phosphate products as second products. Induces dermonecrosis, hemolysis, increased vascular permeability, edema, inflammatory response, and platelet aggregation. This Loxosceles hirsuta (Recluse spider) protein is Dermonecrotic toxin LhSicTox-alphaIV1ii.